Consider the following 194-residue polypeptide: ATP-dependent Clp protease proteolytic subunit (194 aa).

The active-site Nucleophile is S98. H123 is an active-site residue.

It belongs to the peptidase S14 family. In terms of assembly, fourteen ClpP subunits assemble into 2 heptameric rings which stack back to back to give a disk-like structure with a central cavity, resembling the structure of eukaryotic proteasomes.

It localises to the cytoplasm. It catalyses the reaction Hydrolysis of proteins to small peptides in the presence of ATP and magnesium. alpha-casein is the usual test substrate. In the absence of ATP, only oligopeptides shorter than five residues are hydrolyzed (such as succinyl-Leu-Tyr-|-NHMec, and Leu-Tyr-Leu-|-Tyr-Trp, in which cleavage of the -Tyr-|-Leu- and -Tyr-|-Trp bonds also occurs).. Cleaves peptides in various proteins in a process that requires ATP hydrolysis. Has a chymotrypsin-like activity. Plays a major role in the degradation of misfolded proteins. This Clostridium botulinum (strain Loch Maree / Type A3) protein is ATP-dependent Clp protease proteolytic subunit.